Reading from the N-terminus, the 517-residue chain is FAD-dependent monooxygenase dmxR9 (517 aa).

Val-96 and Arg-162 together coordinate FAD. Active-site residues include Arg-243 and Tyr-270. Residues Asp-365 and Ala-378 each contribute to the FAD site.

The protein belongs to the paxM FAD-dependent monooxygenase family. It depends on FAD as a cofactor.

It functions in the pathway secondary metabolite biosynthesis. Its function is as follows. FAD-dependent monooxygenase; part of the gene cluster that mediates the biosynthesis of the dimeric xanthones cryptosporioptides. The pathway begins with the synthesis of atrochrysone thioester by the polyketide synthase dmx-nrPKS. The atrochrysone carboxyl ACP thioesterase dmxR1 then breaks the thioester bond and releases the atrochrysone carboxylic acid from dmx-nrPKS. Atrochrysone carboxylic acid is decarboxylated by the decarboxylase dmxR15, and oxidized by the anthrone oxygenase dmxR16 to yield emodin. Emodin is then reduced to emodin hydroquinone by the oxidoreductase dmxR7. A-ring reduction by the short chain dehydrogenase dmxR18, dehydration by the scytalone dehydratase-like protein dmxR17 and probable spontaneous re-oxidation, results in overall deoxygenation to chrysophanol. Baeyer-Villiger oxidation by the Baeyer-Villiger monooxygenase (BVMO) dmxR6 then yields monodictylactone in equilibrium with monodictyphenone. In the case of the cryptosporioptides biosynthesis, monodictylactone is reduced at C-12 to an alcohol (by the short chain dehydrogenases dmxR12 or dmxR8) and hydroxylated at C-5 by dmxR9, yielding the electron-rich aromatic which could eliminate H(2)O to form the ortho-quinonemethide, followed by tautomerisation to paraquinone and complete the formal reduction to produce the 10-methylgroup. Conjugate addition of C-4a-OH to the resulting paraquinone by the monooxygenase dmxR10 then gives cyclohexadienone, which is then reduced at C-5 by the short chain dehydrogenase dmxR3 to give the dihydroxanthone. The 6,7-epoxide in the cryptosporioptides could be introduced by the cytochrome P450 monooxygenase dmxL3. The highly reducing PKS dmxL2 manufactures butyrate, which is further carboxylated by dmxL1 to form ethylmalonate. It is not yet clear whether the carboxylation occurs while the butyrate is attached to the ACP of dmxL2, but this unusual fungal metabolite could then be esterified to O-5 by the O-acetyltransferase dmxR13. Finally, dimerization performed by dmxR5 gives the observed dimers cryptosporioptides A, B and C as the final products of the pathway. In Cryptosporiopsis sp. (strain 8999), this protein is FAD-dependent monooxygenase dmxR9.